The chain runs to 236 residues: Mitochondrial-abundant heat soluble protein (236 aa).

The transit peptide at 1–73 directs the protein to the mitochondrion; the sequence is MSRYLLRDVQ…AARAGVVLRG (73 aa). Disordered stretches follow at residues 102 to 135 and 165 to 209; these read RIHS…NEAA and RSNG…EIVA. 2 stretches are compositionally biased toward polar residues: residues 105–126 and 192–202; these read SQSS…NSPQ and APDSSKNTKSV. Residues 126–143 carry the MAHS motif motif; that stretch reads QPEGKANEAAERAKQFMN.

The protein localises to the mitochondrion. Its function is as follows. Mitochondrial heat soluble protein acting as a molecular shield in water-deficient condition. This is Mitochondrial-abundant heat soluble protein from Ramazzottius varieornatus (Water bear).